Consider the following 341-residue polypeptide: L-threonine 3-dehydrogenase (341 aa).

C38 contacts Zn(2+). Catalysis depends on charge relay system residues T40 and H43. Zn(2+)-binding residues include H63, E64, C93, C96, C99, and C107. NAD(+)-binding positions include I175, D195, R200, 262 to 264 (LGI), and 286 to 287 (IY).

The protein belongs to the zinc-containing alcohol dehydrogenase family. Homotetramer. Zn(2+) serves as cofactor.

The protein resides in the cytoplasm. The enzyme catalyses L-threonine + NAD(+) = (2S)-2-amino-3-oxobutanoate + NADH + H(+). The protein operates within amino-acid degradation; L-threonine degradation via oxydo-reductase pathway; glycine from L-threonine: step 1/2. Functionally, catalyzes the NAD(+)-dependent oxidation of L-threonine to 2-amino-3-ketobutyrate. In Proteus mirabilis (strain HI4320), this protein is L-threonine 3-dehydrogenase.